We begin with the raw amino-acid sequence, 566 residues long: Proline--tRNA ligase (566 aa).

It belongs to the class-II aminoacyl-tRNA synthetase family. ProS type 1 subfamily. In terms of assembly, homodimer.

It is found in the cytoplasm. The enzyme catalyses tRNA(Pro) + L-proline + ATP = L-prolyl-tRNA(Pro) + AMP + diphosphate. Its function is as follows. Catalyzes the attachment of proline to tRNA(Pro) in a two-step reaction: proline is first activated by ATP to form Pro-AMP and then transferred to the acceptor end of tRNA(Pro). As ProRS can inadvertently accommodate and process non-cognate amino acids such as alanine and cysteine, to avoid such errors it has two additional distinct editing activities against alanine. One activity is designated as 'pretransfer' editing and involves the tRNA(Pro)-independent hydrolysis of activated Ala-AMP. The other activity is designated 'posttransfer' editing and involves deacylation of mischarged Ala-tRNA(Pro). The misacylated Cys-tRNA(Pro) is not edited by ProRS. The protein is Proline--tRNA ligase of Shouchella clausii (strain KSM-K16) (Alkalihalobacillus clausii).